Consider the following 519-residue polypeptide: Exodeoxyribonuclease 7 large subunit (519 aa).

A disordered region spans residues 500–519 (VGRGKTRKPKEEPPAQGSLL).

This sequence belongs to the XseA family. In terms of assembly, heterooligomer composed of large and small subunits.

Its subcellular location is the cytoplasm. It catalyses the reaction Exonucleolytic cleavage in either 5'- to 3'- or 3'- to 5'-direction to yield nucleoside 5'-phosphates.. In terms of biological role, bidirectionally degrades single-stranded DNA into large acid-insoluble oligonucleotides, which are then degraded further into small acid-soluble oligonucleotides. The sequence is that of Exodeoxyribonuclease 7 large subunit from Cereibacter sphaeroides (strain ATCC 17029 / ATH 2.4.9) (Rhodobacter sphaeroides).